A 335-amino-acid chain; its full sequence is 34 kDa spicule matrix protein (335 aa).

A signal peptide spans 1 to 17 (MKGLLLILASLVAIATG). In terms of domain architecture, C-type lectin spans 29-194 (SGASCYRYFN…ATAMRAFVCE (166 aa)). A disulfide bridge connects residues Cys50 and Cys193. Residues 199-335 (QNIPPGQQPG…QEAETDVTGS (137 aa)) are disordered. Residues 207–310 (PGFGGQQPGF…GGPQRPGMGG (104 aa)) are compositionally biased toward gly residues. Low complexity predominate over residues 311 to 323 (QPNSPNPRFNRPR).

The protein belongs to the SM50 family. As to expression, embryo spicule.

The protein resides in the secreted. Major matrix protein of the sea urchin embryo spicule which directs crystal growth in certain orientations and inhibit growth in others. In Lytechinus pictus (Painted sea urchin), this protein is 34 kDa spicule matrix protein.